Reading from the N-terminus, the 1257-residue chain is Pesticidal crystal protein Cry12Aa (1257 aa).

This sequence belongs to the delta endotoxin family.

Endotoxin with nematicidal activity. The chain is Pesticidal crystal protein Cry12Aa (cry12Aa) from Bacillus thuringiensis.